The chain runs to 205 residues: Glycerol-3-phosphate acyltransferase (205 aa).

4 helical membrane passes run 4–24 (IAPG…AILV), 80–100 (PFWL…PIFF), 112–132 (FGAI…TWLL), and 138–158 (GYSS…VWWF).

This sequence belongs to the PlsY family. In terms of assembly, probably interacts with PlsX.

Its subcellular location is the cell inner membrane. It catalyses the reaction an acyl phosphate + sn-glycerol 3-phosphate = a 1-acyl-sn-glycero-3-phosphate + phosphate. It participates in lipid metabolism; phospholipid metabolism. Catalyzes the transfer of an acyl group from acyl-phosphate (acyl-PO(4)) to glycerol-3-phosphate (G3P) to form lysophosphatidic acid (LPA). This enzyme utilizes acyl-phosphate as fatty acyl donor, but not acyl-CoA or acyl-ACP. The polypeptide is Glycerol-3-phosphate acyltransferase (Cronobacter sakazakii (strain ATCC BAA-894) (Enterobacter sakazakii)).